The sequence spans 252 residues: Chitooligosaccharide deacetylase (252 aa).

Mg(2+)-binding residues include His-61 and His-125.

The protein belongs to the YdjC deacetylase family. ChbG subfamily. As to quaternary structure, homodimer. The cofactor is Mg(2+).

It localises to the cytoplasm. It carries out the reaction N,N'-diacetylchitobiose + H2O = N-acetyl-beta-D-glucosaminyl-(1-&gt;4)-D-glucosamine + acetate. The enzyme catalyses diacetylchitobiose-6'-phosphate + H2O = N'-monoacetylchitobiose-6'-phosphate + acetate. It participates in glycan degradation; chitin degradation. Its function is as follows. Involved in the degradation of chitin. ChbG is essential for growth on the acetylated chitooligosaccharides chitobiose and chitotriose but is dispensable for growth on cellobiose and chitosan dimer, the deacetylated form of chitobiose. Deacetylation of chitobiose-6-P and chitotriose-6-P is necessary for both the activation of the chb promoter by the regulatory protein ChbR and the hydrolysis of phosphorylated beta-glucosides by the phospho-beta-glucosidase ChbF. Catalyzes the removal of only one acetyl group from chitobiose-6-P to yield monoacetylchitobiose-6-P, the inducer of ChbR and the substrate of ChbF. The protein is Chitooligosaccharide deacetylase of Escherichia coli O6:K15:H31 (strain 536 / UPEC).